The chain runs to 360 residues: Phosphoserine aminotransferase (360 aa).

Position 41 (Arg41) interacts with L-glutamate. Pyridoxal 5'-phosphate-binding positions include 75–76 (AS), Trp99, Thr152, Asp171, and Gln194. An N6-(pyridoxal phosphate)lysine modification is found at Lys195. 236–237 (NT) lines the pyridoxal 5'-phosphate pocket.

The protein belongs to the class-V pyridoxal-phosphate-dependent aminotransferase family. SerC subfamily. In terms of assembly, homodimer. Pyridoxal 5'-phosphate is required as a cofactor.

The protein resides in the cytoplasm. It carries out the reaction O-phospho-L-serine + 2-oxoglutarate = 3-phosphooxypyruvate + L-glutamate. It catalyses the reaction 4-(phosphooxy)-L-threonine + 2-oxoglutarate = (R)-3-hydroxy-2-oxo-4-phosphooxybutanoate + L-glutamate. The protein operates within amino-acid biosynthesis; L-serine biosynthesis; L-serine from 3-phospho-D-glycerate: step 2/3. Its pathway is cofactor biosynthesis; pyridoxine 5'-phosphate biosynthesis; pyridoxine 5'-phosphate from D-erythrose 4-phosphate: step 3/5. Functionally, catalyzes the reversible conversion of 3-phosphohydroxypyruvate to phosphoserine and of 3-hydroxy-2-oxo-4-phosphonooxybutanoate to phosphohydroxythreonine. The chain is Phosphoserine aminotransferase from Porphyromonas gingivalis (strain ATCC 33277 / DSM 20709 / CIP 103683 / JCM 12257 / NCTC 11834 / 2561).